We begin with the raw amino-acid sequence, 106 residues long: Small ribosomal subunit protein bS6 (106 aa).

Belongs to the bacterial ribosomal protein bS6 family.

Binds together with bS18 to 16S ribosomal RNA. This is Small ribosomal subunit protein bS6 from Cyanothece sp. (strain PCC 7425 / ATCC 29141).